The primary structure comprises 338 residues: MSASGLPFDDFRALLRNLPGPDTAALVAARERDGQLTKPPGALGRLEEIAFWLAAWTGRPPAVNRPLVAIFAGNHGVTRQGVTPFPASVTAQMVENFAAGGAAINQICVAHDLGLKVFDLALDYPTGDITEEPALSERDCAATMAFGMEAIAGGTDLLCIGEMGIGNTTIAAAINLGLYGGTAEEWVGPGTGSEGEVLKRKIAAVKKAVALHRDHLSDPLEVMRRLGGREIAAMAGAILAARMQKVPVIIDGYVATAAAAILKAANPAALDHCLIGHVSSEPGHMRAIEKLGKTPLLALGMRLGEGTGAALAAGIVKAAAACHSGMATFAQAGVSNKV.

The Proton acceptor role is filled by Glu305.

Belongs to the CobT family.

It catalyses the reaction 5,6-dimethylbenzimidazole + nicotinate beta-D-ribonucleotide = alpha-ribazole 5'-phosphate + nicotinate + H(+). It participates in nucleoside biosynthesis; alpha-ribazole biosynthesis; alpha-ribazole from 5,6-dimethylbenzimidazole: step 1/2. Catalyzes the synthesis of alpha-ribazole-5'-phosphate from nicotinate mononucleotide (NAMN) and 5,6-dimethylbenzimidazole (DMB). The protein is Nicotinate-nucleotide--dimethylbenzimidazole phosphoribosyltransferase of Sinorhizobium medicae (strain WSM419) (Ensifer medicae).